A 256-amino-acid chain; its full sequence is BI1-like protein (256 aa).

7 helical membrane passes run 53-73 (VYGI…VVVL), 85-105 (PGIL…LHIY), 113-133 (LILL…SCAM), 138-158 (IVLQ…AYTF), 167-187 (FSFL…TSFI), 189-209 (MFFP…ALVF), and 228-248 (EYIL…LTIL).

The protein belongs to the BI1 family.

It is found in the membrane. This chain is BI1-like protein, found in Arabidopsis thaliana (Mouse-ear cress).